A 283-amino-acid chain; its full sequence is MTLRQALGEAVRRLAAGGVERPRLEAEVLLGWACSLTRPRLLARLEEELAPAAAGRFWQAIDRRAAGYPLQYLTGHQEFMSLDFKVTPAVLIPRQDTEVVVEAVLERLDPCESYTIADCGTGSGAIALSLAHYLPRARVYATDISPAALTVAQENARKLGLAARVTLLQGDFLAPLRGLKLDALVANPPYIPTAALPGLPADVRSEPRLALDGGPDGLDAYRFLLPGAAGLLRPGGLLALEIGSDQGQAVKDLARAVGAYRNEQVLPDYAGRDRCFLAYRREE.

S-adenosyl-L-methionine contacts are provided by residues 120 to 124 (GTGSG), Asp143, Phe172, and Asn187. Residue 187 to 190 (NPPY) participates in substrate binding.

This sequence belongs to the protein N5-glutamine methyltransferase family. PrmC subfamily.

The catalysed reaction is L-glutaminyl-[peptide chain release factor] + S-adenosyl-L-methionine = N(5)-methyl-L-glutaminyl-[peptide chain release factor] + S-adenosyl-L-homocysteine + H(+). Functionally, methylates the class 1 translation termination release factors RF1/PrfA and RF2/PrfB on the glutamine residue of the universally conserved GGQ motif. The protein is Release factor glutamine methyltransferase of Moorella thermoacetica (strain ATCC 39073 / JCM 9320).